A 140-amino-acid polypeptide reads, in one-letter code: Alpha-lactalbumin (140 aa).

The first 19 residues, 1–19, serve as a signal peptide directing secretion; that stretch reads MMSLLPLLLIGIVLPATQA. In terms of domain architecture, C-type lysozyme spans 20–140; that stretch reads KDYGKCELNQ…CRENLDQWNC (121 aa). Cystine bridges form between Cys25/Cys140, Cys47/Cys131, Cys80/Cys96, and Cys92/Cys110. Ca(2+) contacts are provided by Lys98, Asp101, Asp103, Asp106, and Asp107.

Lactose synthase (LS) is a heterodimer of a catalytic component, beta1,4-galactosyltransferase (beta4Gal-T1) and a regulatory component, alpha-lactalbumin (LA). In terms of tissue distribution, mammary gland specific. Secreted in milk.

It is found in the secreted. In terms of biological role, regulatory subunit of lactose synthase, changes the substrate specificity of galactosyltransferase in the mammary gland making glucose a good acceptor substrate for this enzyme. This enables LS to synthesize lactose, the major carbohydrate component of milk. In other tissues, galactosyltransferase transfers galactose onto the N-acetylglucosamine of the oligosaccharide chains in glycoproteins. The sequence is that of Alpha-lactalbumin (LALBA) from Trichosurus vulpecula (Brush-tailed possum).